A 312-amino-acid chain; its full sequence is uncharacterized protein (312 aa).

Position 112-118 (112-118 (LIGLPMV)) interacts with ATP.

Belongs to the MurCDEF family.

This is an uncharacterized protein from Methanothermobacter thermautotrophicus (strain ATCC 29096 / DSM 1053 / JCM 10044 / NBRC 100330 / Delta H) (Methanobacterium thermoautotrophicum).